The following is a 301-amino-acid chain: Fructokinase (301 aa).

Residues H165, C181, H184, and C187 each contribute to the Zn(2+) site.

The protein belongs to the ROK (NagC/XylR) family. It depends on Mg(2+) as a cofactor.

It carries out the reaction D-fructose + ATP = D-fructose 6-phosphate + ADP + H(+). Inhibition by zinc ions. This chain is Fructokinase (frk), found in Zymomonas mobilis subsp. mobilis (strain ATCC 31821 / ZM4 / CP4).